The sequence spans 240 residues: Uridylate kinase (240 aa).

K12 to G15 is a binding site for ATP. G54 contributes to the UMP binding site. Positions 55 and 59 each coordinate ATP. Residues D74 and T135–T142 contribute to the UMP site. Residues T162, Y168, and D171 each coordinate ATP.

It belongs to the UMP kinase family. Homohexamer.

It localises to the cytoplasm. The catalysed reaction is UMP + ATP = UDP + ADP. The protein operates within pyrimidine metabolism; CTP biosynthesis via de novo pathway; UDP from UMP (UMPK route): step 1/1. Inhibited by UTP. Its function is as follows. Catalyzes the reversible phosphorylation of UMP to UDP. The polypeptide is Uridylate kinase (Xanthomonas euvesicatoria pv. vesicatoria (strain 85-10) (Xanthomonas campestris pv. vesicatoria)).